The chain runs to 412 residues: DNA polymerase IV (412 aa).

The 182-residue stretch at 12-193 (ILHVDMNCFF…LPVGAMHGIG (182 aa)) folds into the UmuC domain. Mg(2+) is bound by residues Asp-16 and Asp-112. Glu-113 is an active-site residue. The tract at residues 235–257 (KGMDDREVDPSQMGQHKSVGNSM) is disordered. Polar residues predominate over residues 246–257 (QMGQHKSVGNSM).

The protein belongs to the DNA polymerase type-Y family. Monomer. Requires Mg(2+) as cofactor.

The protein localises to the cytoplasm. It carries out the reaction DNA(n) + a 2'-deoxyribonucleoside 5'-triphosphate = DNA(n+1) + diphosphate. Poorly processive, error-prone DNA polymerase involved in untargeted mutagenesis. Copies undamaged DNA at stalled replication forks, which arise in vivo from mismatched or misaligned primer ends. These misaligned primers can be extended by PolIV. Exhibits no 3'-5' exonuclease (proofreading) activity. May be involved in translesional synthesis, in conjunction with the beta clamp from PolIII. This is DNA polymerase IV from Bacillus anthracis.